We begin with the raw amino-acid sequence, 1373 residues long: DNA-directed RNA polymerase subunit beta (1373 aa).

It belongs to the RNA polymerase beta chain family. In terms of assembly, the RNAP catalytic core consists of 2 alpha, 1 beta, 1 beta' and 1 omega subunit. When a sigma factor is associated with the core the holoenzyme is formed, which can initiate transcription.

It carries out the reaction RNA(n) + a ribonucleoside 5'-triphosphate = RNA(n+1) + diphosphate. DNA-dependent RNA polymerase catalyzes the transcription of DNA into RNA using the four ribonucleoside triphosphates as substrates. This chain is DNA-directed RNA polymerase subunit beta, found in Rhodopseudomonas palustris (strain BisB18).